Consider the following 256-residue polypeptide: 5-keto-4-deoxy-D-glucarate aldolase (256 aa).

The active-site Proton acceptor is H50. Q151 serves as a coordination point for substrate. Mg(2+) is bound at residue E153. S178 and D179 together coordinate substrate. D179 is a Mg(2+) binding site.

Belongs to the HpcH/HpaI aldolase family. KDGluc aldolase subfamily. In terms of assembly, homohexamer; trimer of dimers. Requires Mg(2+) as cofactor.

It carries out the reaction 5-dehydro-4-deoxy-D-glucarate = 2-hydroxy-3-oxopropanoate + pyruvate. It catalyses the reaction 2-dehydro-3-deoxy-D-glucarate = 2-hydroxy-3-oxopropanoate + pyruvate. Its pathway is carbohydrate acid metabolism; galactarate degradation; D-glycerate from galactarate: step 2/3. Functionally, catalyzes the reversible retro-aldol cleavage of both 5-keto-4-deoxy-D-glucarate and 2-keto-3-deoxy-D-glucarate to pyruvate and tartronic semialdehyde. The sequence is that of 5-keto-4-deoxy-D-glucarate aldolase from Escherichia coli (strain K12 / DH10B).